The chain runs to 113 residues: uncharacterized protein (113 aa).

This is an uncharacterized protein from Ureaplasma parvum serovar 3 (strain ATCC 700970).